Consider the following 226-residue polypeptide: DNA mismatch repair protein MutH (226 aa).

Belongs to the MutH family.

The protein localises to the cytoplasm. Sequence-specific endonuclease that cleaves unmethylated GATC sequences. It is involved in DNA mismatch repair. In Actinobacillus pleuropneumoniae serotype 3 (strain JL03), this protein is DNA mismatch repair protein MutH.